The sequence spans 117 residues: G antigen 6 (117 aa).

Residues 1-117 (MSWRGRSTYY…PEEGEKQSQC (117 aa)) form a disordered region. 2 stretches are compositionally biased toward acidic residues: residues 32 to 45 (FSDEVEPATPEEGE) and 87 to 96 (ECEDGPDGQE). Residues 103–117 (EEVKTPEEGEKQSQC) are compositionally biased toward basic and acidic residues.

Belongs to the GAGE family. In terms of tissue distribution, expressed in a variety of tumor tissues but not in normal tissues, except testis.

This chain is G antigen 6 (GAGE6), found in Homo sapiens (Human).